The following is a 37-amino-acid chain: Alpha-conotoxin-like Kn1.2 (37 aa).

The span at 1 to 15 shows a compositional bias: basic and acidic residues; that stretch reads ESDGAHAKARADKPA. Residues 1–22 constitute a propeptide that is removed on maturation; that stretch reads ESDGAHAKARADKPARSATNRQ. The segment at 1-23 is disordered; the sequence is ESDGAHAKARADKPARSATNRQP. Cystine bridges form between cysteine 25/cysteine 31 and cysteine 26/cysteine 36. Cysteine 36 carries the cysteine amide modification.

It belongs to the conotoxin A superfamily. As to expression, expressed by the venom duct.

It localises to the secreted. In terms of biological role, alpha-conotoxins act on postsynaptic membranes, they bind to the nicotinic acetylcholine receptors (nAChR) and thus inhibit them. This toxin inhibits high voltage-activated (HVA) calcium channel currents in rat DRG neurons (13% inhibition at 1 uM toxin) probably by activating GABA(B) receptors (GABBR1 and/or GABBR2). The sequence is that of Alpha-conotoxin-like Kn1.2 from Conus kinoshitai (Kinoshita's cone).